The sequence spans 60 residues: Prokaryotic ubiquitin-like protein UBact (60 aa).

Positions 1-60 are disordered; the sequence is MPERKTQPTTDQPWTKPNDGGDESGPRSPEVERPNTRDLLERMKRVDPRQARRYRQRSGE. The segment covering 29-50 has biased composition (basic and acidic residues); sequence PEVERPNTRDLLERMKRVDPRQ. Residues 51–60 show a composition bias toward basic residues; that stretch reads ARRYRQRSGE. Glu-60 is covalently cross-linked (Isoglutamyl lysine isopeptide (Glu-Lys) (interchain with K-? in acceptor proteins)).

The protein belongs to the ubiquitin-like protein UBact family.

In terms of biological role, may function as a protein modifier covalently attached to lysine residues of substrate proteins. This may serve to target the modified proteins for degradation by proteasomes. This chain is Prokaryotic ubiquitin-like protein UBact, found in Fraserbacteria sp. (strain RBG_16_55_9).